Here is a 125-residue protein sequence, read N- to C-terminus: MORF4 family-associated protein 1 (125 aa).

A disordered region spans residues 76 to 99; the sequence is ESALNHLQGAGGAEPRGPRAEKAD. Residues 94-124 are a coiled coil; that stretch reads RAEKADEKAQEMAKMAEMLVQLVRRIEKSES.

Belongs to the MORF4 family-associated protein family. Found in a complex composed of MORF4L1, MRFAP1 and RB1. Interacts via its N-terminus with MORF4L1. Interacts with CSTB and MORF4L2.

The protein resides in the nucleus. Its subcellular location is the cytoplasm. It is found in the perinuclear region. In Rattus norvegicus (Rat), this protein is MORF4 family-associated protein 1.